Here is a 742-residue protein sequence, read N- to C-terminus: Phosphoribosylformylglycinamidine synthase subunit PurL (742 aa).

Histidine 50 is a catalytic residue. Residues tyrosine 53 and lysine 92 each coordinate ATP. Glutamate 94 serves as a coordination point for Mg(2+). Residues 95–98 (SHNH) and arginine 117 contribute to the substrate site. Histidine 96 (proton acceptor) is an active-site residue. Residue aspartate 118 coordinates Mg(2+). Position 241 (glutamine 241) interacts with substrate. Position 269 (aspartate 269) interacts with Mg(2+). Residue 313–315 (ESQ) coordinates substrate. ATP is bound by residues aspartate 494 and glycine 531. A Mg(2+)-binding site is contributed by asparagine 532. Serine 534 is a substrate binding site.

The protein belongs to the FGAMS family. Monomer. Part of the FGAM synthase complex composed of 1 PurL, 1 PurQ and 2 PurS subunits.

It is found in the cytoplasm. It catalyses the reaction N(2)-formyl-N(1)-(5-phospho-beta-D-ribosyl)glycinamide + L-glutamine + ATP + H2O = 2-formamido-N(1)-(5-O-phospho-beta-D-ribosyl)acetamidine + L-glutamate + ADP + phosphate + H(+). Its pathway is purine metabolism; IMP biosynthesis via de novo pathway; 5-amino-1-(5-phospho-D-ribosyl)imidazole from N(2)-formyl-N(1)-(5-phospho-D-ribosyl)glycinamide: step 1/2. In terms of biological role, part of the phosphoribosylformylglycinamidine synthase complex involved in the purines biosynthetic pathway. Catalyzes the ATP-dependent conversion of formylglycinamide ribonucleotide (FGAR) and glutamine to yield formylglycinamidine ribonucleotide (FGAM) and glutamate. The FGAM synthase complex is composed of three subunits. PurQ produces an ammonia molecule by converting glutamine to glutamate. PurL transfers the ammonia molecule to FGAR to form FGAM in an ATP-dependent manner. PurS interacts with PurQ and PurL and is thought to assist in the transfer of the ammonia molecule from PurQ to PurL. The chain is Phosphoribosylformylglycinamidine synthase subunit PurL from Sinorhizobium fredii (strain NBRC 101917 / NGR234).